The chain runs to 264 residues: 3-methyl-2-oxobutanoate hydroxymethyltransferase (264 aa).

Mg(2+) contacts are provided by D45 and D84. Residues 45–46, D84, and K112 contribute to the 3-methyl-2-oxobutanoate site; that span reads DS. E114 provides a ligand contact to Mg(2+). The active-site Proton acceptor is the E181.

Belongs to the PanB family. In terms of assembly, homodecamer; pentamer of dimers. It depends on Mg(2+) as a cofactor.

It is found in the cytoplasm. It carries out the reaction 3-methyl-2-oxobutanoate + (6R)-5,10-methylene-5,6,7,8-tetrahydrofolate + H2O = 2-dehydropantoate + (6S)-5,6,7,8-tetrahydrofolate. The protein operates within cofactor biosynthesis; (R)-pantothenate biosynthesis; (R)-pantoate from 3-methyl-2-oxobutanoate: step 1/2. Its function is as follows. Catalyzes the reversible reaction in which hydroxymethyl group from 5,10-methylenetetrahydrofolate is transferred onto alpha-ketoisovalerate to form ketopantoate. This Escherichia fergusonii (strain ATCC 35469 / DSM 13698 / CCUG 18766 / IAM 14443 / JCM 21226 / LMG 7866 / NBRC 102419 / NCTC 12128 / CDC 0568-73) protein is 3-methyl-2-oxobutanoate hydroxymethyltransferase.